Here is a 1534-residue protein sequence, read N- to C-terminus: DNA-directed RNA polymerase subunit beta'' (1534 aa).

Positions 220, 296, 303, and 306 each coordinate Zn(2+). Basic and acidic residues-rich tracts occupy residues 644 to 668 (RTQE…RTRE) and 678 to 688 (PENKYRTREGE). Disordered stretches follow at residues 644–698 (RTQE…EDEY) and 719–800 (YRTL…KKEG). 2 stretches are compositionally biased toward acidic residues: residues 744 to 762 (GEYE…SSED) and 770 to 789 (TLEE…EYGS).

The protein belongs to the RNA polymerase beta' chain family. RpoC2 subfamily. In terms of assembly, in plastids the minimal PEP RNA polymerase catalytic core is composed of four subunits: alpha, beta, beta', and beta''. When a (nuclear-encoded) sigma factor is associated with the core the holoenzyme is formed, which can initiate transcription. It depends on Zn(2+) as a cofactor.

Its subcellular location is the plastid. The protein resides in the chloroplast. The catalysed reaction is RNA(n) + a ribonucleoside 5'-triphosphate = RNA(n+1) + diphosphate. DNA-dependent RNA polymerase catalyzes the transcription of DNA into RNA using the four ribonucleoside triphosphates as substrates. This chain is DNA-directed RNA polymerase subunit beta'', found in Saccharum officinarum (Sugarcane).